Consider the following 971-residue polypeptide: Unconventional myosin-XIX (971 aa).

The tract at residues 1 to 25 (MSRPLSKNTEREPKQINGHQNNLSN) is disordered. The region spanning 48 to 755 (HLYDDLTKVN…MVELLEERRL (708 aa)) is the Myosin motor domain. Residue 145 to 152 (GESGAGKT) participates in ATP binding. Residues 611-633 (LESLMQILHSTTPHYIRCIKPNV) form an actin-binding region. IQ domains lie at 758-787 (ISSK…ATTI) and 780-809 (QSKA…AATV). The myMOMA region stretch occupies residues 826–971 (AAELDDSTED…FNEILLEKTV (146 aa)).

The protein belongs to the TRAFAC class myosin-kinesin ATPase superfamily. Myosin family. In terms of assembly, myosin is a hexamer of 2 heavy chains and 4 light chains.

It localises to the mitochondrion outer membrane. The protein localises to the cytoplasm. It is found in the cytoskeleton. Its function is as follows. Actin-based motor molecule with ATPase activity that localizes to the mitochondrion outer membrane. Motor protein that moves towards the plus-end of actin filaments. Required for mitochondrial inheritance during mitosis. May be involved in mitochondrial transport or positioning. The sequence is that of Unconventional myosin-XIX from Xenopus laevis (African clawed frog).